We begin with the raw amino-acid sequence, 315 residues long: Putative pyruvate, phosphate dikinase regulatory protein (315 aa).

A disordered region spans residues 1 to 32 (MGPFGARASPEAGQVVKQPLTDDPQESLAQGE). 189 to 196 (GVSRTSKT) is a binding site for ADP.

Belongs to the pyruvate, phosphate/water dikinase regulatory protein family. PDRP subfamily.

It catalyses the reaction N(tele)-phospho-L-histidyl/L-threonyl-[pyruvate, phosphate dikinase] + ADP = N(tele)-phospho-L-histidyl/O-phospho-L-threonyl-[pyruvate, phosphate dikinase] + AMP + H(+). It carries out the reaction N(tele)-phospho-L-histidyl/O-phospho-L-threonyl-[pyruvate, phosphate dikinase] + phosphate + H(+) = N(tele)-phospho-L-histidyl/L-threonyl-[pyruvate, phosphate dikinase] + diphosphate. Its function is as follows. Bifunctional serine/threonine kinase and phosphorylase involved in the regulation of the pyruvate, phosphate dikinase (PPDK) by catalyzing its phosphorylation/dephosphorylation. In Caulobacter vibrioides (strain ATCC 19089 / CIP 103742 / CB 15) (Caulobacter crescentus), this protein is Putative pyruvate, phosphate dikinase regulatory protein.